Here is a 321-residue protein sequence, read N- to C-terminus: Protein BIG GRAIN 1-like E (321 aa).

Positions 134 to 217 are disordered; the sequence is AGSKKNKSKS…PPPYLNTPTK (84 aa). Over residues 135–147 the composition is skewed to basic residues; the sequence is GSKKNKSKSKSKT. The span at 172–206 shows a compositional bias: low complexity; the sequence is ISHFFSSSRSTSTTTTTTASSSSKSLISSSSSGFR.

Belongs to the BIG GRAIN 1 (BG1) plant protein family.

Its subcellular location is the cell membrane. In terms of biological role, involved in auxin transport. Regulator of the auxin signaling pathway. The sequence is that of Protein BIG GRAIN 1-like E from Arabidopsis thaliana (Mouse-ear cress).